A 316-amino-acid chain; its full sequence is Pantothenate kinase (316 aa).

95–102 (GSVAVGKS) provides a ligand contact to ATP.

It belongs to the prokaryotic pantothenate kinase family.

It localises to the cytoplasm. The catalysed reaction is (R)-pantothenate + ATP = (R)-4'-phosphopantothenate + ADP + H(+). It functions in the pathway cofactor biosynthesis; coenzyme A biosynthesis; CoA from (R)-pantothenate: step 1/5. This Yersinia pseudotuberculosis serotype O:3 (strain YPIII) protein is Pantothenate kinase.